A 144-amino-acid polypeptide reads, in one-letter code: Maximins 3/H14 (144 aa).

The signal sequence occupies residues 1–18 (MNFKYIVAVSFLIASAYA). 2 propeptides span residues 19–43 (RSVQ…REIR) and 73–122 (RTAE…KKEK). Residue isoleucine 143 is modified to Isoleucine amide.

The protein belongs to the bombinin family. Expressed by the skin glands.

The protein resides in the secreted. In terms of biological role, maximin-3 shows antibacterial activity against both Gram-positive and Gram-negative bacteria. It also shows antimicrobial activity against the fungus C.albicans, but not against A.flavus nor P.uticale. It has little hemolytic activity. It possess a significant cytotoxicity against tumor cell lines. It possess a significant anti-HIV activity. It shows high spermicidal activity. Its function is as follows. Maximin-H14 shows antimicrobial activity against bacteria and against the fungus C.albicans. Shows strong hemolytic activity. This Bombina maxima (Giant fire-bellied toad) protein is Maximins 3/H14.